The following is a 354-amino-acid chain: Protein Wnt-11 (354 aa).

The signal sequence occupies residues 1-24 (MKPSPQFFLAAFLSLILQTGICYG). 2 N-linked (GlcNAc...) asparagine glycosylation sites follow: asparagine 40 and asparagine 90. Disulfide bonds link cysteine 80–cysteine 91, cysteine 130–cysteine 138, cysteine 140–cysteine 157, cysteine 209–cysteine 223, cysteine 211–cysteine 218, cysteine 283–cysteine 314, cysteine 299–cysteine 309, cysteine 313–cysteine 353, cysteine 329–cysteine 344, cysteine 331–cysteine 341, and cysteine 336–cysteine 337. The O-palmitoleoyl serine; by PORCN moiety is linked to residue serine 215. N-linked (GlcNAc...) asparagine glycans are attached at residues asparagine 300 and asparagine 304.

This sequence belongs to the Wnt family. Post-translationally, palmitoleoylation is required for efficient binding to frizzled receptors. Depalmitoleoylation leads to Wnt signaling pathway inhibition. In terms of tissue distribution, expressed in the dermatome. The expression domain is mutually exclusive to the other Wnt genes.

It is found in the secreted. Its subcellular location is the extracellular space. The protein resides in the extracellular matrix. Its function is as follows. Ligand for members of the frizzled family of seven transmembrane receptors. May play a role in the formation of dermal structure, both limb and feather buds. Is likely to signal over only few cell diameters. In Gallus gallus (Chicken), this protein is Protein Wnt-11 (WNT11).